The primary structure comprises 90 residues: Putative UPF0401 protein YpjI (90 aa).

Belongs to the UPF0401 family.

The sequence is that of Putative UPF0401 protein YpjI (ypjI) from Escherichia coli (strain K12).